The sequence spans 312 residues: Tetraacyldisaccharide 4'-kinase (312 aa).

Residue 60 to 67 (IAGGSGKT) coordinates ATP.

It belongs to the LpxK family.

The enzyme catalyses a lipid A disaccharide + ATP = a lipid IVA + ADP + H(+). It participates in glycolipid biosynthesis; lipid IV(A) biosynthesis; lipid IV(A) from (3R)-3-hydroxytetradecanoyl-[acyl-carrier-protein] and UDP-N-acetyl-alpha-D-glucosamine: step 6/6. Its function is as follows. Transfers the gamma-phosphate of ATP to the 4'-position of a tetraacyldisaccharide 1-phosphate intermediate (termed DS-1-P) to form tetraacyldisaccharide 1,4'-bis-phosphate (lipid IVA). The chain is Tetraacyldisaccharide 4'-kinase from Helicobacter pylori (strain ATCC 700392 / 26695) (Campylobacter pylori).